Reading from the N-terminus, the 1124-residue chain is Sodium/hydrogen exchanger 11 (1124 aa).

11 helical membrane passes run 25–45 (LVEE…GGLL), 52–72 (CEVI…HMAY), 90–110 (FSLY…DVEF), 120–140 (VLLT…YVVI), 179–199 (IYID…SIFF), 224–244 (DILG…CILA), 254–274 (IILC…LGMS), 305–325 (IFSS…IGCG), 335–355 (IPFI…TILL), 372–392 (GVVI…APDV), and 405–425 (MFIL…SYVM). Asn-447 and Asn-473 each carry an N-linked (GlcNAc...) asparagine glycan. Transmembrane regions (helical) follow at residues 612-632 (TGQI…WPMA), 641-661 (ISIN…KIII), 674-694 (LEFF…FVKL), and 706-726 (VIMG…IVPI). The ion transport-like stretch occupies residues 642–723 (SINYYFMFLY…IRFLPLFKII (82 aa)). Position 867-999 (867-999 (IWLEGKDVLI…EYKIWLKLAL (133 aa))) interacts with a nucleoside 3',5'-cyclic phosphate.

The protein belongs to the monovalent cation:proton antiporter 1 (CPA1) transporter (TC 2.A.36) family.

It is found in the membrane. Its function is as follows. Involved in pH regulation. The polypeptide is Sodium/hydrogen exchanger 11 (SLC9C2) (Homo sapiens (Human)).